Here is a 279-residue protein sequence, read N- to C-terminus: Beta-lactamase (279 aa).

The N-terminal stretch at 1–21 (MRYVRLCVISLLATLPLVVYA) is a signal peptide. Ser66 functions as the Acyl-ester intermediate in the catalytic mechanism. Cys73 and Cys119 are joined by a disulfide. Residue 230–232 (KTG) coordinates substrate.

Belongs to the class-A beta-lactamase family.

The catalysed reaction is a beta-lactam + H2O = a substituted beta-amino acid. This chain is Beta-lactamase, found in Klebsiella pneumoniae.